Consider the following 289-residue polypeptide: Geranylgeranyl diphosphate synthase (289 aa).

Residues R43 and H73 each coordinate isopentenyl diphosphate. Residues D80 and D86 each contribute to the Mg(2+) site. R91 is a binding site for (2E,6E)-farnesyl diphosphate. Isopentenyl diphosphate is bound at residue R92. Positions 170, 171, and 205 each coordinate (2E,6E)-farnesyl diphosphate.

The protein belongs to the FPP/GGPP synthase family. Requires Mg(2+) as cofactor.

It carries out the reaction isopentenyl diphosphate + (2E,6E)-farnesyl diphosphate = (2E,6E,10E)-geranylgeranyl diphosphate + diphosphate. The protein operates within isoprenoid biosynthesis; geranylgeranyl diphosphate biosynthesis; geranylgeranyl diphosphate from farnesyl diphosphate and isopentenyl diphosphate: step 1/1. Functionally, catalyzes the condensation of farnesyl diphosphate (FPP) and isopentenyl diphosphate (IPP) to yield geranylgeranyl diphosphate (GGPP) needed for biosynthesis of carotenoids and diterpenes. The protein is Geranylgeranyl diphosphate synthase (crtE) of Rhodobacter capsulatus (strain ATCC BAA-309 / NBRC 16581 / SB1003).